The sequence spans 140 residues: Transcription antitermination protein NusB (140 aa).

This sequence belongs to the NusB family.

Functionally, involved in transcription antitermination. Required for transcription of ribosomal RNA (rRNA) genes. Binds specifically to the boxA antiterminator sequence of the ribosomal RNA (rrn) operons. The polypeptide is Transcription antitermination protein NusB (Alteromonas mediterranea (strain DSM 17117 / CIP 110805 / LMG 28347 / Deep ecotype)).